The following is a 510-amino-acid chain: Inositol-3-phosphate synthase (510 aa).

24 residues coordinate NAD(+): Gly-70, Gly-71, Asn-72, Asn-73, Asp-143, Ile-180, Gln-190, Arg-193, Thr-230, Ala-231, Asn-232, Thr-233, Gly-281, Ser-282, Asp-306, Ser-309, Asn-340, Asn-341, Asp-342, Lys-355, Gly-393, Asp-394, Asp-422, and Ser-423.

Belongs to the myo-inositol 1-phosphate synthase family. NAD(+) serves as cofactor.

Its subcellular location is the cytoplasm. The protein localises to the cytosol. It is found in the nucleus. It carries out the reaction D-glucose 6-phosphate = 1D-myo-inositol 3-phosphate. The protein operates within polyol metabolism; myo-inositol biosynthesis; myo-inositol from D-glucose 6-phosphate: step 1/2. Its function is as follows. Key enzyme in myo-inositol biosynthesis pathway that catalyzes the conversion of glucose 6-phosphate to 1-myo-inositol 1-phosphate in a NAD-dependent manner. This Sesamum indicum (Oriental sesame) protein is Inositol-3-phosphate synthase.